The primary structure comprises 272 residues: Methylesterase 8 (272 aa).

The active-site Acyl-ester intermediate is the S102. Residues D222 and H250 each act as charge relay system in the active site.

This sequence belongs to the AB hydrolase superfamily. Methylesterase family.

Its function is as follows. Methylesterase shown to have carboxylesterase activity in vitro. The polypeptide is Methylesterase 8 (Arabidopsis thaliana (Mouse-ear cress)).